Consider the following 178-residue polypeptide: Large ribosomal subunit protein bL17 (178 aa).

It belongs to the bacterial ribosomal protein bL17 family. Part of the 50S ribosomal subunit. Contacts protein L32.

In Lachnospira eligens (strain ATCC 27750 / DSM 3376 / VPI C15-48 / C15-B4) (Eubacterium eligens), this protein is Large ribosomal subunit protein bL17.